The chain runs to 472 residues: Maintenance of mitochondrial morphology protein 1 (472 aa).

The Lumenal segment spans residues 1 to 22; the sequence is MAFQQGEAAPVSTQSSLSFTQG. Residues 23-43 form a helical membrane-spanning segment; that stretch reads FLLGQLSVVLLIGAFIKFFIF. Residues 44 to 472 lie on the Cytoplasmic side of the membrane; sequence GEAPPPPSRG…GSMPEAPGAQ (429 aa). 3 disordered regions span residues 51-92, 270-303, and 370-472; these read SRGL…VPSS, LHTP…PKSS, and RMGR…PGAQ. The span at 81 to 92 shows a compositional bias: polar residues; that stretch reads STSNVLRPVPSS. Residues 124–365 enclose the SMP-LTD domain; it reads QPESLDWFNV…EPRVQVVGLP (242 aa). Positions 270–280 are enriched in pro residues; that stretch reads LHTPSPMPSPP. Low complexity predominate over residues 281–297; sequence TAGAQPAAGAQPTDGGD. Residues 450–460 are compositionally biased toward basic and acidic residues; the sequence is TRERSLGDDFH.

Belongs to the MMM1 family. Homodimer. Component of the ER-mitochondria encounter structure (ERMES) or MDM complex, composed of mmm1, mdm10, mdm12 and mdm34. A mmm1 homodimer associates with one molecule of mdm12 on each side in a pairwise head-to-tail manner, and the SMP-LTD domains of mmm1 and mdm12 generate a continuous hydrophobic tunnel for phospholipid trafficking.

The protein localises to the endoplasmic reticulum membrane. Component of the ERMES/MDM complex, which serves as a molecular tether to connect the endoplasmic reticulum (ER) and mitochondria. Components of this complex are involved in the control of mitochondrial shape and protein biogenesis, and function in nonvesicular lipid trafficking between the ER and mitochondria. The mdm12-mmm1 subcomplex functions in the major beta-barrel assembly pathway that is responsible for biogenesis of all outer membrane beta-barrel proteins, and acts in a late step after the SAM complex. The mdm10-mdm12-mmm1 subcomplex further acts in the TOM40-specific pathway after the action of the mdm12-mmm1 complex. Essential for establishing and maintaining the structure of mitochondria and maintenance of mtDNA nucleoids. The protein is Maintenance of mitochondrial morphology protein 1 of Emericella nidulans (strain FGSC A4 / ATCC 38163 / CBS 112.46 / NRRL 194 / M139) (Aspergillus nidulans).